The chain runs to 154 residues: NADPH-dependent 7-cyano-7-deazaguanine reductase (154 aa).

Residues 1–13 (MSVTDVSGLSQLG) are compositionally biased toward polar residues. A disordered region spans residues 1–30 (MSVTDVSGLSQLGTKVDTPESPEKAVLEKV). Positions 17–27 (DTPESPEKAVL) are enriched in basic and acidic residues. The Thioimide intermediate role is filled by C52. The Proton donor role is filled by D59. Residues 74–76 (VES) and 93–94 (HE) each bind substrate.

Belongs to the GTP cyclohydrolase I family. QueF type 1 subfamily.

It localises to the cytoplasm. The enzyme catalyses 7-aminomethyl-7-carbaguanine + 2 NADP(+) = 7-cyano-7-deazaguanine + 2 NADPH + 3 H(+). The protein operates within tRNA modification; tRNA-queuosine biosynthesis. Functionally, catalyzes the NADPH-dependent reduction of 7-cyano-7-deazaguanine (preQ0) to 7-aminomethyl-7-deazaguanine (preQ1). This chain is NADPH-dependent 7-cyano-7-deazaguanine reductase, found in Agrobacterium fabrum (strain C58 / ATCC 33970) (Agrobacterium tumefaciens (strain C58)).